Reading from the N-terminus, the 273-residue chain is Cell division protein ZipA (273 aa).

Residue M1 is a topological domain, periplasmic. The helical transmembrane segment at 2-22 (DIGLREWLIVIGIIVIAGILF) threads the bilayer. Residues 23-273 (DGWRRMRGGK…ERRQMTIKQR (251 aa)) are Cytoplasmic-facing. The interval 61-127 (VVNREHEPSL…DLQERPQKEQ (67 aa)) is disordered.

The protein belongs to the ZipA family. In terms of assembly, interacts with FtsZ via their C-terminal domains.

The protein localises to the cell inner membrane. Essential cell division protein that stabilizes the FtsZ protofilaments by cross-linking them and that serves as a cytoplasmic membrane anchor for the Z ring. Also required for the recruitment to the septal ring of downstream cell division proteins. The polypeptide is Cell division protein ZipA (Stutzerimonas stutzeri (strain A1501) (Pseudomonas stutzeri)).